A 770-amino-acid polypeptide reads, in one-letter code: Amyloid-beta precursor protein (770 aa).

Positions 1–17 are cleaved as a signal peptide; that stretch reads MLPSLALLLLAAWTVRA. At 18–701 the chain is on the extracellular side; the sequence is LEVPTDGNAG…AEDVGSNKGA (684 aa). Positions 28–123 are GFLD subdomain; the sequence is LLAEPQIAMF…PYRCLVGEFV (96 aa). One can recognise an E1 domain in the interval 28–189; it reads LLAEPQIAMF…RGVEFVCCPL (162 aa). Cystine bridges form between Cys-38/Cys-62, Cys-73/Cys-117, Cys-98/Cys-105, Cys-133/Cys-187, Cys-144/Cys-174, and Cys-158/Cys-186. 96–110 lines the heparin pocket; that stretch reads NWCKRGRKQCKTHTH. Residues 131 to 189 form a cuBD subdomain region; the sequence is DKCKFLHQERMDVCETHLHWHTVAKETCSEKSTNLHDYGMLLPCGIDKFRGVEFVCCPL. Residues 135–155 form a copper-binding region; it reads FLHQERMDVCETHLHWHTVAK. Positions 147, 151, and 168 each coordinate Cu(2+). Residues 181–188 are zinc-binding; sequence GVEFVCCP. Positions 183, 186, and 187 each coordinate Zn(2+). Positions 196–207 are enriched in acidic residues; it reads IDSADAEEDDSD. Residues 196 to 283 are disordered; the sequence is IDSADAEEDD…TTTTTTTESV (88 aa). Phosphoserine; by CK2 is present on Ser-198. Ser-206 carries the phosphoserine; by CK1 modification. A sulfotyrosine mark is found at Tyr-217 and Tyr-262. Over residues 228–264 the composition is skewed to acidic residues; that stretch reads VAEEEEVADVEEEEAEDDEDVEDGDEVEEEAEEPYEE. Over residues 268–281 the composition is skewed to low complexity; the sequence is RTTSIATTTTTTTE. 3 cysteine pairs are disulfide-bonded: Cys-291/Cys-341, Cys-300/Cys-324, and Cys-316/Cys-337. Residues 291 to 341 enclose the BPTI/Kunitz inhibitor domain; the sequence is CSEQAETGPCRAMISRWYFDVTEGKCAPFFYGGCGGNRNNFDTEEYCMAVC. At Tyr-336 the chain carries Sulfotyrosine. Residues 344 to 365 carry the OX-2 motif; that stretch reads VSSQSLLKTTSEPLPQDPVKLP. The region spanning 374 to 565 is the E2 domain; that stretch reads AVDKYLETPG…EEIQDEVDEL (192 aa). Positions 391-423 are heparin-binding; the sequence is FQKAKERLEAKHRERMSQVMREWEEAERQAKNL. Ser-441 is modified (phosphoserine). The interval 491–522 is heparin-binding; that stretch reads FNMLKKYVRAEQKDRQHTLKHFEHVRMVDPKK. Tyr-497 is subject to Phosphotyrosine. The tract at residues 523–540 is collagen-binding; that stretch reads AAQIRSQVMTHLRVIYER. N-linked (GlcNAc...) asparagine glycans are attached at residues Asn-542 and Asn-571. Ser-656 is a glycosylation site (O-linked (Xyl...) (chondroitin sulfate) serine; in L-APP isoforms). Cu(2+)-binding residues include His-677 and His-685. 2 residues coordinate Zn(2+): His-677 and His-685. An interaction with PSEN1 region spans residues 695-722; sequence VGSNKGAIIGLMVGGVVIATVIVITLVM. A helical transmembrane segment spans residues 702-722; it reads IIGLMVGGVVIATVIVITLVM. Over 723–770 the chain is Cytoplasmic; sequence LKKKQYTSIHHGVVEVDAAVTPEERHLSKMQQNGYENPTYKFFEQMQN. Positions 724–734 match the Basolateral sorting signal motif; it reads KKKQYTSIHHG. Thr-729 carries the post-translational modification Phosphothreonine. Ser-730 carries the phosphoserine; by APP-kinase I modification. The segment at 732-751 is interaction with G(o)-alpha; sequence HHGVVEVDAAVTPEERHLSK. Thr-743 carries the post-translational modification Phosphothreonine; by CDK5 and MAPK10. The tract at residues 756-770 is required for the interaction with KIF5B and for anterograde transport in axons; that stretch reads GYENPTYKFFEQMQN. At Tyr-757 the chain carries Phosphotyrosine; by ABL1. The short motif at 757–762 is the YENPXY motif; contains endocytosis signal element; that stretch reads YENPTY. Lys-763 is covalently cross-linked (Glycyl lysine isopeptide (Lys-Gly) (interchain with G-Cter in ubiquitin)).

Belongs to the APP family. As to quaternary structure, binds, via its C-terminus, to the PID domain of several cytoplasmic proteins, including APBB family members, the APBA family, MAPK8IP1, SHC1 and NUMB and DAB1. Binding to DAB1 inhibits its serine phosphorylation. Interacts (via NPXY motif) with DAB2 (via PID domain); the interaction is impaired by tyrosine phosphorylation of the NPXY motif. Also interacts with GPCR-like protein BPP, APPBP1, IB1, KNS2 (via its TPR domains), APPBP2 (via BaSS) and DDB1. In vitro, it binds MAPT via the MT-binding domains. Associates with microtubules in the presence of ATP and in a kinesin-dependent manner. Interacts, through a C-terminal domain, with GNAO1. Amyloid-beta protein 42 binds CHRNA7 in hippocampal neurons. Amyloid-beta associates with HADH2. Interacts with CPEB1, ANKS1B and AGER. Interacts with ITM2B. Interacts with ITM2C. Interacts with IDE. Can form homodimers; dimerization is enhanced in the presence of Cu(2+) ions. Can form homodimers; this is promoted by heparin binding. Amyloid-beta protein 40 interacts with S100A9. CTF-alpha product of APP interacts with GSAP. Isoform APP695 interacts with SORL1 (via N-terminal ectodomain); this interaction retains APP in the trans-Golgi network and reduces processing into soluble APP-alpha and amyloid-beta peptides. The C99 fragment also interacts with SORL1. Isoform APP751 interacts with SORL1. Isoform APP770 interacts with SORL1. Interacts with PLD3. Interacts with VDAC1. Interacts with NSG1; could regulate APP processing. Amyloid-beta protein 42 interacts with FPR2. Interacts with SYT7. Interacts (via transmembrane region) with PSEN1; the interaction is direct. Interacts with LRRK2. Interacts (via cytoplasmic domain) with KIF5B. Interacts (via C-terminus) with APBB2/FE65L1 (via C-terminus). Interacts (via intracellular domain) with APBB3. Proteolytically processed under normal cellular conditions. Cleavage either by alpha-secretase, beta-secretase or theta-secretase leads to generation and extracellular release of soluble APP peptides, S-APP-alpha and S-APP-beta, and the retention of corresponding membrane-anchored C-terminal fragments, C80, C83 and C99. Subsequent processing of C80 and C83 by gamma-secretase yields P3 peptides. This is the major secretory pathway and is non-amyloidogenic. Alternatively, presenilin/nicastrin-mediated gamma-secretase processing of C99 releases the amyloid-beta proteins, amyloid-beta protein 40 and amyloid-beta protein 42, major components of amyloid plaques, and the cytotoxic C-terminal fragments, gamma-CTF(50), gamma-CTF(57) and gamma-CTF(59). PSEN1 cleavage is more efficient with C83 than with C99 as substrate (in vitro). Amyloid-beta protein 40 and Amyloid-beta protein 42 are cleaved by ACE. Many other minor amyloid-beta peptides, amyloid-beta 1-X peptides, are found in cerebral spinal fluid (CSF) including the amyloid-beta X-15 peptides, produced from the cleavage by alpha-secretase. Post-translationally, proteolytically cleaved by caspases during neuronal apoptosis. Cleavage at Asp-739 by either caspase-3, -8 or -9 results in the production of the neurotoxic C31 peptide and the increased production of amyloid-beta peptides. In terms of processing, N-glycosylated. O-glycosylated. O-linkage of chondroitin sulfate to the L-APP isoforms produces the APP proteoglycan core proteins, the appicans. The chondroitin sulfate chain of appicans contains 4-O-sulfated galactose in the linkage region and chondroitin sulfate E in the repeated disaccharide region. Post-translationally, phosphorylation in the C-terminal on tyrosine, threonine and serine residues is neuron-specific. Phosphorylation can affect APP processing, neuronal differentiation and interaction with other proteins. Phosphorylated on Thr-743 in neuronal cells by Cdc5 kinase and Mapk10, in dividing cells by Cdc2 kinase in a cell-cycle dependent manner with maximal levels at the G2/M phase and, in vitro, by GSK-3-beta. The Thr-743 phosphorylated form causes a conformational change which reduces binding of Fe65 family members. In dopaminergic (DA) neurons, phosphorylation on Thr-743 by LRKK2 promotes the production and the nuclear translocation of the APP intracellular domain (AICD) which induces DA neuron apoptosis. Phosphorylation on Tyr-757 is required for SHC binding. Phosphorylated in the extracellular domain by casein kinases on both soluble and membrane-bound APP. This phosphorylation is inhibited by heparin. In terms of processing, extracellular binding and reduction of copper, results in a corresponding oxidation of Cys-144 and Cys-158, and the formation of a disulfide bond. Trophic-factor deprivation triggers the cleavage of surface APP by beta-secretase to release sAPP-beta which is further cleaved to release an N-terminal fragment of APP (N-APP). Post-translationally, amyloid-beta peptides are degraded by IDE. In terms of processing, sulfated on tyrosine residues. Expressed in the brain. In the brain, non-L-APP isoforms are expressed in neurons, isoform APP695 being the predominant form. In astrocytes and microglial cells, almost 50% is L-isoform (appican).

It is found in the cell membrane. Its subcellular location is the membrane. It localises to the perikaryon. The protein localises to the cell projection. The protein resides in the growth cone. It is found in the clathrin-coated pit. Its subcellular location is the early endosome. It localises to the cytoplasmic vesicle. The protein localises to the endoplasmic reticulum. The protein resides in the golgi apparatus. It is found in the cell surface. Its subcellular location is the nucleus. It localises to the cytoplasm. The protein localises to the secreted. Functions as a cell surface receptor and performs physiological functions on the surface of neurons relevant to neurite growth, neuronal adhesion and axonogenesis. Interaction between APP molecules on neighboring cells promotes synaptogenesis. Involved in cell mobility and transcription regulation through protein-protein interactions. Can promote transcription activation through binding to APBB1-KAT5 and inhibit Notch signaling through interaction with Numb. Couples to apoptosis-inducing pathways such as those mediated by G(o) and JIP. Inhibits G(o)-alpha ATPase activity. Acts as a kinesin I membrane receptor, mediating the axonal transport of beta-secretase and presenilin 1. By acting as a kinesin I membrane receptor, plays a role in axonal anterograde transport of cargo towards synapses in axons. May be involved in copper homeostasis/oxidative stress through copper ion reduction. Can regulate neurite outgrowth through binding to components of the extracellular matrix such as heparin and collagen I and IV. The splice isoforms that contain the BPTI domain possess protease inhibitor activity. Induces a AGER-dependent pathway that involves activation of p38 MAPK, resulting in internalization of amyloid-beta peptide and leading to mitochondrial dysfunction in cultured mitochondrial dysfunction in cultured cortical neurons. Provides Cu(2+) ions for GPC1 which are required for release of nitric oxide (NO) and subsequent degradation of the heparan sulfate chains on GPC1. Functionally, amyloid-beta peptides are lipophilic metal chelators with metal-reducing activity. Binds transient metals such as copper, zinc and iron. Rat and mouse amyloid-beta peptides bind only weakly transient metals and have little reducing activity due to substitutions of transient metal chelating residues. Amyloid-beta protein 42 may activate mononuclear phagocytes in the brain and elicits inflammatory responses. Promotes both tau aggregation and TPK II-mediated phosphorylation. Also binds GPC1 in lipid rafts. In terms of biological role, appicans elicit adhesion of neural cells to the extracellular matrix and may regulate neurite outgrowth in the brain. Its function is as follows. The gamma-CTF peptides as well as the caspase-cleaved peptides, including C31, are potent enhancers of neuronal apoptosis. The sequence is that of Amyloid-beta precursor protein from Rattus norvegicus (Rat).